Consider the following 98-residue polypeptide: Co-chaperonin GroES 1 (98 aa).

The protein belongs to the GroES chaperonin family. As to quaternary structure, heptamer of 7 subunits arranged in a ring. Interacts with the chaperonin GroEL.

Its subcellular location is the cytoplasm. Functionally, together with the chaperonin GroEL, plays an essential role in assisting protein folding. The GroEL-GroES system forms a nano-cage that allows encapsulation of the non-native substrate proteins and provides a physical environment optimized to promote and accelerate protein folding. GroES binds to the apical surface of the GroEL ring, thereby capping the opening of the GroEL channel. The polypeptide is Co-chaperonin GroES 1 (Rhizobium meliloti (strain 1021) (Ensifer meliloti)).